The following is an 898-amino-acid chain: Protein translocase subunit SecA (898 aa).

ATP-binding positions include Gln-87, 105–109 (GEGKT), and Asp-512. Residues 855 to 865 (MQYQNNEGTSS) are compositionally biased toward polar residues. A disordered region spans residues 855 to 898 (MQYQNNEGTSSLHEKSEHKIGRNESCPCGSGKKYKHCHGSKAKY). Residues 866–876 (LHEKSEHKIGR) are compositionally biased toward basic and acidic residues. Residues Cys-880, Cys-882, Cys-891, and His-892 each coordinate Zn(2+). Basic residues predominate over residues 886–898 (KKYKHCHGSKAKY).

The protein belongs to the SecA family. As to quaternary structure, monomer and homodimer. Part of the essential Sec protein translocation apparatus which comprises SecA, SecYEG and auxiliary proteins SecDF-YajC and YidC. The cofactor is Zn(2+).

The protein localises to the cell inner membrane. It localises to the cytoplasm. The enzyme catalyses ATP + H2O + cellular proteinSide 1 = ADP + phosphate + cellular proteinSide 2.. In terms of biological role, part of the Sec protein translocase complex. Interacts with the SecYEG preprotein conducting channel. Has a central role in coupling the hydrolysis of ATP to the transfer of proteins into and across the cell membrane, serving both as a receptor for the preprotein-SecB complex and as an ATP-driven molecular motor driving the stepwise translocation of polypeptide chains across the membrane. The sequence is that of Protein translocase subunit SecA from Histophilus somni (strain 2336) (Haemophilus somnus).